We begin with the raw amino-acid sequence, 248 residues long: Ribosomal RNA small subunit methyltransferase G (248 aa).

S-adenosyl-L-methionine is bound by residues Gly-85, Phe-90, 108 to 110 (DSS), 137 to 138 (AE), and Arg-156.

The protein belongs to the methyltransferase superfamily. RNA methyltransferase RsmG family.

It is found in the cytoplasm. Functionally, specifically methylates the N7 position of a guanine in 16S rRNA. This Prochlorococcus marinus (strain NATL2A) protein is Ribosomal RNA small subunit methyltransferase G.